The chain runs to 772 residues: TBC domain-containing protein C4G8.04 (772 aa).

A compositionally biased stretch (polar residues) spans 143–161; that stretch reads SFFPSSQEPSIPENPSSLT. 2 disordered regions span residues 143-163 and 275-294; these read SFFP…LTGE and KFFR…TFVS. Residues 275 to 291 show a composition bias toward low complexity; it reads KFFRSSPRCSTPSVSST. Thr-395 bears the Phosphothreonine mark. One can recognise a Rab-GAP TBC domain in the interval 504–693; it reads GVPLCYKAKV…RIFDMLFCDG (190 aa).

This chain is TBC domain-containing protein C4G8.04, found in Schizosaccharomyces pombe (strain 972 / ATCC 24843) (Fission yeast).